Reading from the N-terminus, the 306-residue chain is MWFKNLLTYRLTQEVPFEPEALEAALASKPARPCASQELTTYGFVAPFGKGEDAPLVHVSGEYLLIAARKEERILPSSVVNDAVKEKVEEIETEQMRKVYKKERDQIKDEIIQAFLPRAFIRRSMIFAAIAPRLGVILVNSASAKRAEDLLSTLREVMGSLPVRPATVKVAPVATMTDWVKSQQAAEGFHVLDECELRDTAEDGGIVRCKRQDLTGEEIQLHLSTGKVVTQLALAWQDKLSFILDDKMVIKRLKFEELLQEQAEQDGGDEAAQQFDASFQLMMMTFAEFLPVLFEALGGEEIPQGV.

It belongs to the RdgC family.

It localises to the cytoplasm. It is found in the nucleoid. May be involved in recombination. The chain is Recombination-associated protein RdgC from Pseudomonas putida (strain GB-1).